The primary structure comprises 343 residues: Heat-inducible transcription repressor HrcA (343 aa).

The protein belongs to the HrcA family.

In terms of biological role, negative regulator of class I heat shock genes (grpE-dnaK-dnaJ and groELS operons). Prevents heat-shock induction of these operons. The protein is Heat-inducible transcription repressor HrcA of Bacillus subtilis (strain 168).